The following is a 262-amino-acid chain: Acyl-coenzyme A diphosphatase FITM2 (262 aa).

Residues 1–23 are Cytoplasmic-facing; sequence MEHLERCAWFLRGTLVRATVRRH. Residues 24–44 traverse the membrane as a helical segment; that stretch reads LPWALVAAMLAGSVVKELSPL. At 45 to 57 the chain is on the lumenal side; the sequence is PESYLSNKRNVLN. Residues 58–78 form a helical membrane-spanning segment; it reads VYFVKLAWAWTVCLLLPFIAL. Residues 79-93 are Cytoplasmic-facing; that stretch reads TNYHLTGKTSLVLRR. The helical transmembrane segment at 94 to 114 threads the bilayer; sequence LSTLLVGTAIWYICTALFSNI. Over 115–145 the chain is Lumenal; that stretch reads EHYTGSCYQSPALEGIRQEHRSKQQCHREGG. Residues 146–166 traverse the membrane as a helical segment; that stretch reads FWHGFDISGHSFLLTFCALMI. Histidine 155 is a catalytic residue. The Cytoplasmic segment spans residues 167–190; it reads VEEMAVLHEVKTDRGHHLHAAITT. The chain crosses the membrane as a helical span at residues 191-211; the sequence is LVVALGFLTFIWVWMFLCTAV. Topologically, residues 212–218 are lumenal; the sequence is YFHDLTQ. Histidine 214 is an active-site residue. The helical transmembrane segment at 219 to 239 threads the bilayer; sequence KVFGTMFGLLGWYGTYGYWYL. At 240–262 the chain is on the cytoplasmic side; the sequence is KSFSPGLPPQSCSLTLKRDTYKK.

The protein belongs to the FIT family. As to expression, widely expressed, with highest levels in white and brown adipose tissues (at protein level). In the heart, mRNA expression levels do not correlate well with protein levels, suggesting post-transcriptional regulation in this organ.

The protein resides in the endoplasmic reticulum membrane. It carries out the reaction an acyl-CoA + H2O = an acyl-4'-phosphopantetheine + adenosine 3',5'-bisphosphate + 2 H(+). It catalyses the reaction (9Z)-octadecenoyl-CoA + H2O = S-(9Z-octadecenoyl)-4'-phosphopantetheine + adenosine 3',5'-bisphosphate + 2 H(+). The catalysed reaction is (5Z,8Z,11Z,14Z)-eicosatetraenoyl-CoA + H2O = S-(5Z,8Z,11Z,14Z-eicosatetraenoyl)-4'-phosphopantetheine + adenosine 3',5'-bisphosphate + 2 H(+). The enzyme catalyses hexadecanoyl-CoA + H2O = S-hexadecanoyl-4'-phosphopantetheine + adenosine 3',5'-bisphosphate + 2 H(+). Its function is as follows. Fatty acyl-coenzyme A (CoA) diphosphatase that hydrolyzes fatty acyl-CoA to yield acyl-4'-phosphopantetheine and adenosine 3',5'-bisphosphate. Preferentially hydrolyzes unsaturated long-chain acyl-CoA substrates such as oleoyl-CoA/(9Z)-octadecenoyl-CoA and arachidonoyl-CoA/(5Z,8Z,11Z,14Z)-eicosatetraenoyl-CoA in the endoplasmic reticulum (ER) lumen. This catalytic activity is required for maintaining ER structure and for lipid droplets (LDs) biogenesis, which are lipid storage organelles involved in maintaining lipid and energy homeostasis. Directly binds to diacylglycerol (DAGs) and triacylglycerol, which is also important for LD biogenesis. May support directional budding of nacent LDs from the ER into the cytosol by reducing DAG levels at sites of LD formation. Plays a role in the regulation of cell morphology and cytoskeletal organization. This Mus musculus (Mouse) protein is Acyl-coenzyme A diphosphatase FITM2.